Here is a 268-residue protein sequence, read N- to C-terminus: Tryptophan synthase alpha chain (268 aa).

Active-site proton acceptor residues include Glu-49 and Asp-60.

It belongs to the TrpA family. In terms of assembly, tetramer of two alpha and two beta chains.

The catalysed reaction is (1S,2R)-1-C-(indol-3-yl)glycerol 3-phosphate + L-serine = D-glyceraldehyde 3-phosphate + L-tryptophan + H2O. Its pathway is amino-acid biosynthesis; L-tryptophan biosynthesis; L-tryptophan from chorismate: step 5/5. In terms of biological role, the alpha subunit is responsible for the aldol cleavage of indoleglycerol phosphate to indole and glyceraldehyde 3-phosphate. This Yersinia pseudotuberculosis serotype O:3 (strain YPIII) protein is Tryptophan synthase alpha chain.